The chain runs to 239 residues: 1-(5-phosphoribosyl)-5-[(5-phosphoribosylamino)methylideneamino] imidazole-4-carboxamide isomerase (239 aa).

Asp-8 serves as the catalytic Proton acceptor. Residue Asp-129 is the Proton donor of the active site.

This sequence belongs to the HisA/HisF family.

It is found in the cytoplasm. The catalysed reaction is 1-(5-phospho-beta-D-ribosyl)-5-[(5-phospho-beta-D-ribosylamino)methylideneamino]imidazole-4-carboxamide = 5-[(5-phospho-1-deoxy-D-ribulos-1-ylimino)methylamino]-1-(5-phospho-beta-D-ribosyl)imidazole-4-carboxamide. The protein operates within amino-acid biosynthesis; L-histidine biosynthesis; L-histidine from 5-phospho-alpha-D-ribose 1-diphosphate: step 4/9. The sequence is that of 1-(5-phosphoribosyl)-5-[(5-phosphoribosylamino)methylideneamino] imidazole-4-carboxamide isomerase from Bacillus thuringiensis (strain Al Hakam).